The chain runs to 150 residues: D-aminoacyl-tRNA deacylase (150 aa).

The short motif at 133-134 (GP) is the Gly-cisPro motif, important for rejection of L-amino acids element.

The protein belongs to the DTD family. In terms of assembly, homodimer.

It localises to the cytoplasm. The enzyme catalyses glycyl-tRNA(Ala) + H2O = tRNA(Ala) + glycine + H(+). It carries out the reaction a D-aminoacyl-tRNA + H2O = a tRNA + a D-alpha-amino acid + H(+). In terms of biological role, an aminoacyl-tRNA editing enzyme that deacylates mischarged D-aminoacyl-tRNAs. Also deacylates mischarged glycyl-tRNA(Ala), protecting cells against glycine mischarging by AlaRS. Acts via tRNA-based rather than protein-based catalysis; rejects L-amino acids rather than detecting D-amino acids in the active site. By recycling D-aminoacyl-tRNA to D-amino acids and free tRNA molecules, this enzyme counteracts the toxicity associated with the formation of D-aminoacyl-tRNA entities in vivo and helps enforce protein L-homochirality. The polypeptide is D-aminoacyl-tRNA deacylase (Kocuria rhizophila (strain ATCC 9341 / DSM 348 / NBRC 103217 / DC2201)).